The primary structure comprises 73 residues: Homeodomain-only protein (73 aa).

The segment at residues 3-62 (AEPANGPTEDQVEILEYNFNKVNRHPDPTTLCLIAAEAGLSEEETQKWFKQRLAQWRRSE) is a DNA-binding region (homeobox; degenerate).

Interacts with serum response factor (SRF). Component of a large complex containing histone deacetylases such as HDAC2. Interacts with the acetylated forms of HSPA1A and HSPA1B. Interacts with HSPA8.

The protein resides in the nucleus. Its subcellular location is the cytoplasm. In terms of biological role, atypical homeodomain protein which does not bind DNA and is required to modulate cardiac growth and development. Acts via its interaction with SRF, thereby modulating the expression of SRF-dependent cardiac-specific genes and cardiac development. Prevents SRF-dependent transcription either by inhibiting SRF binding to DNA or by recruiting histone deacetylase (HDAC) proteins that prevent transcription by SRF. Overexpression causes cardiac hypertrophy. Acts as a co-chaperone for HSPA1A and HSPA1B chaperone proteins and assists in chaperone-mediated protein refolding. The polypeptide is Homeodomain-only protein (HOPX) (Sus scrofa (Pig)).